The chain runs to 1015 residues: SPOC domain-containing protein 1 (1015 aa).

Disordered stretches follow at residues 73–97, 118–159, 213–320, and 344–406; these read MVSP…SPVL, GFSL…EPGG, LYPE…PRLE, and AASS…MTPL. Positions 304–320 are enriched in basic and acidic residues; it reads SQDHAEGASKKDFPRLE. The span at 373-382 shows a compositional bias: polar residues; sequence AHPTPCQSDP. The segment covering 388–397 has biased composition (basic and acidic residues); sequence AEPHQQRAED. A TFIIS central domain is found at 410–530; it reads VRSTVVRAMQ…IIEQQQKELY (121 aa). Residues 643-685 are disordered; that stretch reads IQKAPGPAPASSPEVLKVGETPPKEPQDRLQMPAGLKNAPPSP. The 104-residue stretch at 688 to 791 folds into the SPOC domain; that stretch reads WEGSLDMFSI…VQQVKMVLLP (104 aa). Disordered regions lie at residues 858–906 and 967–1015; these read PEDR…PGWG and QSQD…EHEC. The span at 967–978 shows a compositional bias: polar residues; sequence QSQDSLPPSTVV.

In terms of assembly, interacts with DNMT3A, DNMT3C and DNMT3L. Interacts with C19orf84 homolog. Interacts with SPIN1; promoting recruitment to transposons marked with histone H3 trimethylated at both 'Lys-4' and 'Lys-9' (H3K4me3K9me3).

The protein resides in the nucleus. Its subcellular location is the chromosome. Protein adapter that acts as an essential executor of PIWIL4-piRNA pathway directed transposon DNA methylation and silencing in the male embryonic germ cells. Recruited to young transposons, which are specifically marked with histone H3 trimethylated at both 'Lys-4' and 'Lys-9' (H3K4me3K9me3), via its association with SPIN1 chromatin reader, and associates with the de novo DNA methylation machinery and repressive chromatin remodeling complexes. Following this, PIWIL4 engages with nascent transposable element transcript to direct piRNA-directed DNA methylation. Not required for piRNA biosynthesis. The protein is SPOC domain-containing protein 1 of Mus musculus (Mouse).